Here is a 365-residue protein sequence, read N- to C-terminus: Protein RecA (365 aa).

81–88 is a binding site for ATP; that stretch reads GPESSGKT.

The protein belongs to the RecA family.

The protein resides in the cytoplasm. In terms of biological role, can catalyze the hydrolysis of ATP in the presence of single-stranded DNA, the ATP-dependent uptake of single-stranded DNA by duplex DNA, and the ATP-dependent hybridization of homologous single-stranded DNAs. It interacts with LexA causing its activation and leading to its autocatalytic cleavage. In Borreliella burgdorferi (strain ATCC 35210 / DSM 4680 / CIP 102532 / B31) (Borrelia burgdorferi), this protein is Protein RecA.